Here is a 269-residue protein sequence, read N- to C-terminus: Shikimate dehydrogenase (NADP(+)) (269 aa).

Shikimate is bound by residues 17–19 (SKS) and threonine 64. The Proton acceptor role is filled by lysine 68. Position 80 (glutamate 80) interacts with NADP(+). 2 residues coordinate shikimate: asparagine 89 and aspartate 105. Residues 130-134 (GAGGA), 154-159 (NRTRAK), and methionine 213 each bind NADP(+). Residue tyrosine 215 participates in shikimate binding. Glycine 237 contacts NADP(+).

The protein belongs to the shikimate dehydrogenase family. As to quaternary structure, homodimer.

The enzyme catalyses shikimate + NADP(+) = 3-dehydroshikimate + NADPH + H(+). It functions in the pathway metabolic intermediate biosynthesis; chorismate biosynthesis; chorismate from D-erythrose 4-phosphate and phosphoenolpyruvate: step 4/7. Its function is as follows. Involved in the biosynthesis of the chorismate, which leads to the biosynthesis of aromatic amino acids. Catalyzes the reversible NADPH linked reduction of 3-dehydroshikimate (DHSA) to yield shikimate (SA). The sequence is that of Shikimate dehydrogenase (NADP(+)) from Neisseria meningitidis serogroup C / serotype 2a (strain ATCC 700532 / DSM 15464 / FAM18).